Reading from the N-terminus, the 66-residue chain is Large ribosomal subunit protein bL33c (66 aa).

The protein belongs to the bacterial ribosomal protein bL33 family.

It localises to the plastid. It is found in the chloroplast. This chain is Large ribosomal subunit protein bL33c, found in Arabis hirsuta (Hairy rock-cress).